The following is a 97-amino-acid chain: Defensin-like protein 246 (97 aa).

The first 24 residues, 1–24 (MKFVAIFLVTCVLFSLFPSHLSQG), serve as a signal peptide directing secretion. 4 disulfide bridges follow: Cys-39–Cys-96, Cys-50–Cys-79, Cys-58–Cys-89, and Cys-77–Cys-91.

The protein belongs to the DEFL family. As to expression, flower buds and stems.

The protein resides in the secreted. This Arabidopsis thaliana (Mouse-ear cress) protein is Defensin-like protein 246 (SCRL5).